We begin with the raw amino-acid sequence, 95 residues long: MQSPYIILFALVTLLGSISGGATSTIATRNGDVGLTSAGPTFVRKQRLLRQDPNLYETIMNDRSASAFANALRKAEMAAETEVAPLVRSTNYNDS.

A signal peptide spans 1–20 (MQSPYIILFALVTLLGSISG). The RxLR motif lies at 47–50 (RLLR).

Belongs to the RxLR effector family.

The protein resides in the secreted. It is found in the host nucleus. Its subcellular location is the host cytoplasm. Secreted effector that partially suppresses the host cell death induced by cell death-inducing proteins. The protein is Secreted RxLR effector protein 20 of Plasmopara viticola (Downy mildew of grapevine).